The sequence spans 156 residues: Small ribosomal subunit protein uS7 (156 aa).

The protein belongs to the universal ribosomal protein uS7 family. As to quaternary structure, part of the 30S ribosomal subunit. Contacts proteins S9 and S11.

One of the primary rRNA binding proteins, it binds directly to 16S rRNA where it nucleates assembly of the head domain of the 30S subunit. Is located at the subunit interface close to the decoding center, probably blocks exit of the E-site tRNA. This Alkaliphilus metalliredigens (strain QYMF) protein is Small ribosomal subunit protein uS7.